The sequence spans 169 residues: NAD(P)H-quinone oxidoreductase subunit J, chloroplastic (169 aa).

Belongs to the complex I 30 kDa subunit family. In terms of assembly, NDH is composed of at least 16 different subunits, 5 of which are encoded in the nucleus.

It localises to the plastid. The protein localises to the chloroplast thylakoid membrane. It carries out the reaction a plastoquinone + NADH + (n+1) H(+)(in) = a plastoquinol + NAD(+) + n H(+)(out). The catalysed reaction is a plastoquinone + NADPH + (n+1) H(+)(in) = a plastoquinol + NADP(+) + n H(+)(out). NDH shuttles electrons from NAD(P)H:plastoquinone, via FMN and iron-sulfur (Fe-S) centers, to quinones in the photosynthetic chain and possibly in a chloroplast respiratory chain. The immediate electron acceptor for the enzyme in this species is believed to be plastoquinone. Couples the redox reaction to proton translocation, and thus conserves the redox energy in a proton gradient. The polypeptide is NAD(P)H-quinone oxidoreductase subunit J, chloroplastic (Zygnema circumcarinatum (Green alga)).